The chain runs to 330 residues: 3'-5' exonuclease (330 aa).

The tract at residues 1-92 (MDQYLIKMST…DGTPSPEKEI (92 aa)) is disordered. 2 stretches are compositionally biased toward basic and acidic residues: residues 27–39 (NTTR…KEKI) and 48–66 (KDTP…ENPP). Residues serine 79 and serine 87 each carry the phosphoserine modification. The 173-residue stretch at 117 to 289 (SADEVMQWVE…IGQVIYRDIE (173 aa)) folds into the 3'-5' exonuclease domain. Residues aspartate 139, glutamate 141, and aspartate 277 each coordinate Mg(2+).

Belongs to the WRNexo family.

Its subcellular location is the nucleus. In terms of biological role, has exonuclease activity on both single-stranded and duplex templates bearing overhangs, but not blunt ended duplex DNA, and cleaves in a 3'-5' direction. Essential for the formation of DNA replication focal centers. Has an important role in maintaining genome stability. The polypeptide is 3'-5' exonuclease (Drosophila virilis (Fruit fly)).